A 306-amino-acid chain; its full sequence is Arylesterase (306 aa).

Positions 82–84 (HGG) match the Involved in the stabilization of the negatively charged intermediate by the formation of the oxyanion hole motif. Residues serine 156, aspartate 251, and histidine 281 contribute to the active site.

As to quaternary structure, monomer.

The enzyme catalyses a phenyl acetate + H2O = a phenol + acetate + H(+). It carries out the reaction An aryl dialkyl phosphate + H2O = dialkyl phosphate + an aryl alcohol.. With respect to regulation, completely inhibited by chemical modifiers that are specific to Cys (HgCl(2) and p-chloromercuribenzoic acid), His (diethyl pyrocarbonate) and Ser (diisopropyl fluorophosphate and phenylmethanesulfonyl fluoride). No significant effect with chemical modifiers specific to Lys (pyridoxal 5'-phosphate) and Arg (phenylglyoxal). Not inhibited by inhibitors of A-esterases (paraoxon) or C-esterases (physostigmine/eserine). Activity is also not effected by incubation with 5 mM divalent cations for 30 minutes at 30 degrees Celsius or with 10 mM EDTA for 60 minutes at 75 degrees Celsius. Its function is as follows. Has a broad substrate specificity. Hydrolyzes various p-nitrophenyl phosphates, aromatic esters and p-nitrophenyl fatty acids in vitro. Most active against paraoxon, phenyl acetate and p-nitrophenyl caproate (C6), respectively. Also has tributyrinase activity, but shows no hydrolytic activity toward other triacylglycerols including tricaprylin, trimyristin, tripalmitin or triolein in vitro. The protein is Arylesterase of Saccharolobus solfataricus (Sulfolobus solfataricus).